A 702-amino-acid polypeptide reads, in one-letter code: Cytolytic toxin-alpha (702 aa).

The interval 2-265 (SSDIIMAGLG…KADLLVRDIS (264 aa)) is structural MACPF/CDC pore-forming domain. Residues asparagine 93, asparagine 100, asparagine 201, asparagine 287, and asparagine 311 are each glycosylated (N-linked (GlcNAc...) asparagine). Residues 266–385 (QGLVRKVHSI…DIIEETKHKA (120 aa)) form a structural FAT domain region. The tract at residues 386-513 (VLSQSQMVKD…PIISAVEKIV (128 aa)) is thioredoxin (THX) domain. A B30.2/SPRY domain is found at 505–702 (IISAVEKIVD…RPYHGTVRLL (198 aa)). Asparagine 530 carries N-linked (GlcNAc...) asparagine glycosylation.

It belongs to the SNTX/VTX toxin family. Heterodimer of alpha and beta subunits; non-covalently linked. Also associates into tetramers or even higher aggregates. In terms of processing, intrachain disulfide bonds may be present in the heterodimer. As to expression, expressed by the venom gland.

Its subcellular location is the secreted. Functionally, this heterodimer induces potent hemolytic activities (when tested on rabbit erythrocytes, EC(50)=25-56 ng/mL) due to its ability to form pores in the cell membrane. The pore may be composed of 10 alpha/beta heterodimers. The toxin shows cardiovascular effects that include a vasorelaxant action that may involve the L-arginine-nitric oxid synthase pathway. In addition, it displays edema-inducing activities, increases vascular permeability. It also shows myotoxic activities and interferes irreversibly with neuromuscular function. It also induces irreversible platelet aggregation in rabbit or rat (but not in human or mouse) whole blood. In addition, it has been observed to increase spontaneous quantal acetylcholine release from isolated frog cutaneous pectoris motor endings. The chain is Cytolytic toxin-alpha from Scorpaena plumieri (Spotted scorpionfish).